The sequence spans 36 residues: Photosystem I reaction center subunit VIII (36 aa).

Residues 9 to 29 (IFVPLVGLVFPAVAMASLFLY) traverse the membrane as a helical segment.

This sequence belongs to the PsaI family.

It localises to the plastid. Its subcellular location is the chloroplast thylakoid membrane. Its function is as follows. May help in the organization of the PsaL subunit. This Ostreococcus tauri protein is Photosystem I reaction center subunit VIII.